Reading from the N-terminus, the 266-residue chain is Small ribosomal subunit protein uS2 (266 aa).

It belongs to the universal ribosomal protein uS2 family.

This chain is Small ribosomal subunit protein uS2, found in Bartonella tribocorum (strain CIP 105476 / IBS 506).